We begin with the raw amino-acid sequence, 1190 residues long: PAN2-PAN3 deadenylation complex catalytic subunit PAN2 (1190 aa).

6 WD repeats span residues 24-63, 129-166, 167-207, 222-264, 266-306, and 322-361; these read TTIV…NSLY, NKFN…PNVL, SSFD…TMKT, GNYI…AIAP, PFPA…NVYL, and NNKP…KDFV. Residues 364-511 form a linker region; the sequence is PQPVEQPDII…FQYKFQGKLN (148 aa). A USP domain is found at 512–924; sequence KVPNCYSRLQ…KPIVIMYQQT (413 aa). One can recognise an Exonuclease domain in the interval 988 to 1158; that stretch reads VAIDAEFVML…EDANTALLLY (171 aa). A divalent metal cation-binding residues include aspartate 991, glutamate 993, aspartate 1097, and aspartate 1150.

The protein belongs to the peptidase C19 family. PAN2 subfamily. Forms a heterotrimer with an asymmetric homodimer of the regulatory subunit PAN3 to form the poly(A)-nuclease (PAN) deadenylation complex. The cofactor is a divalent metal cation.

The protein resides in the cytoplasm. The catalysed reaction is Exonucleolytic cleavage of poly(A) to 5'-AMP.. With respect to regulation, positively regulated by the regulatory subunit PAN3. Its function is as follows. Catalytic subunit of the poly(A)-nuclease (PAN) deadenylation complex, one of two cytoplasmic mRNA deadenylases involved in mRNA turnover. PAN specifically shortens poly(A) tails of RNA and the activity is stimulated by poly(A)-binding protein PAB1. PAN deadenylation is followed by rapid degradation of the shortened mRNA tails by the CCR4-NOT complex. Deadenylated mRNAs are then degraded by two alternative mechanisms, namely exosome-mediated 3'-5' exonucleolytic degradation, or deadenylation-dependent mRNA decaping and subsequent 5'-3' exonucleolytic degradation by XRN1. May also be involved in post-transcriptional maturation of mRNA poly(A) tails. The protein is PAN2-PAN3 deadenylation complex catalytic subunit PAN2 of Candida albicans (strain SC5314 / ATCC MYA-2876) (Yeast).